A 109-amino-acid chain; its full sequence is SRA stem-loop-interacting RNA-binding protein, mitochondrial (109 aa).

Ser15 bears the Phosphoserine mark. Residues 19-103 (PVAFVRRIPW…RRPKLPQTSD (85 aa)) enclose the RRM domain. Thr101 is modified (phosphothreonine). Ser102 carries the phosphoserine modification.

As to expression, ubiquitously expressed, with highest level in heart, liver, skeletal muscle and testis.

It is found in the mitochondrion. Its subcellular location is the nucleus. RNA-binding protein that acts as a nuclear receptor corepressor. Probably acts by binding the SRA RNA, and repressing the SRA-mediated nuclear receptor coactivation. Binds the STR7 loop of SRA RNA. Also able to repress glucocorticoid (GR), androgen (AR), thyroid (TR) and VDR-mediated transactivation. The protein is SRA stem-loop-interacting RNA-binding protein, mitochondrial (SLIRP) of Homo sapiens (Human).